Here is a 594-residue protein sequence, read N- to C-terminus: Putative phospholipase B-like 2 (594 aa).

The first 46 residues, 1–46 (MAAPVDGSSGGWAARALRRALALTSLTTLALLASLTGLLLSGPAGA), serve as a signal peptide directing secretion. N93 and N115 each carry an N-linked (GlcNAc...) asparagine glycan. A disulfide bond links C147 and C157. N-linked (GlcNAc...) asparagine glycans are attached at residues N236 and N441. Residues C497 and C500 are joined by a disulfide bond. N520 carries an N-linked (GlcNAc...) asparagine glycan.

It belongs to the phospholipase B-like family. As to quaternary structure, interacts with IGF2R. Post-translationally, the p76 protein is synthesized as a 76 kDa precursor which is then processed into a N-terminal 28 kDa form and a C-terminal 40 kDa form. The C-terminal peptide is further processed into a 15 kDa form. In terms of processing, glycosylated; contains mannose 6-phosphate sugars. In terms of tissue distribution, present at highest levels in spleen, lung and brain (at protein level).

It is found in the lysosome lumen. Functionally, putative phospholipase. The polypeptide is Putative phospholipase B-like 2 (Plbd2) (Mus musculus (Mouse)).